Reading from the N-terminus, the 226-residue chain is Orotidine 5'-phosphate decarboxylase (226 aa).

Substrate-binding positions include Asp8, Lys30, 58-67, Thr117, Arg177, Gln186, Gly206, and Arg207; that span reads DLKIHDIPNT. Lys60 (proton donor) is an active-site residue.

The protein belongs to the OMP decarboxylase family. Type 1 subfamily. As to quaternary structure, homodimer.

It carries out the reaction orotidine 5'-phosphate + H(+) = UMP + CO2. It participates in pyrimidine metabolism; UMP biosynthesis via de novo pathway; UMP from orotate: step 2/2. In terms of biological role, catalyzes the decarboxylation of orotidine 5'-monophosphate (OMP) to uridine 5'-monophosphate (UMP). This is Orotidine 5'-phosphate decarboxylase from Campylobacter jejuni subsp. jejuni serotype O:6 (strain 81116 / NCTC 11828).